Here is a 473-residue protein sequence, read N- to C-terminus: Ribulose bisphosphate carboxylase large chain 1 (473 aa).

N116 and T166 together coordinate substrate. The active-site Proton acceptor is the K168. K170 is a substrate binding site. Residues K194, D196, and E197 each contribute to the Mg(2+) site. K194 is subject to N6-carboxylysine. Catalysis depends on H287, which acts as the Proton acceptor. Substrate-binding residues include R288, H320, and S372.

It belongs to the RuBisCO large chain family. Type I subfamily. Heterohexadecamer of 8 large chains and 8 small chains. Requires Mg(2+) as cofactor.

It catalyses the reaction 2 (2R)-3-phosphoglycerate + 2 H(+) = D-ribulose 1,5-bisphosphate + CO2 + H2O. The catalysed reaction is D-ribulose 1,5-bisphosphate + O2 = 2-phosphoglycolate + (2R)-3-phosphoglycerate + 2 H(+). RuBisCO catalyzes two reactions: the carboxylation of D-ribulose 1,5-bisphosphate, the primary event in carbon dioxide fixation, as well as the oxidative fragmentation of the pentose substrate. Both reactions occur simultaneously and in competition at the same active site. In Nitrobacter winogradskyi (strain ATCC 25391 / DSM 10237 / CIP 104748 / NCIMB 11846 / Nb-255), this protein is Ribulose bisphosphate carboxylase large chain 1.